The chain runs to 263 residues: Putative alpha/beta hydrolase L404 (263 aa).

Gly2 carries N-myristoyl glycine; by host lipidation.

The protein belongs to the AB hydrolase superfamily.

The polypeptide is Putative alpha/beta hydrolase L404 (Acanthamoeba polyphaga (Amoeba)).